Here is a 76-residue protein sequence, read N- to C-terminus: Bacteriocin uberolysin (76 aa).

The propeptide occupies 1-6 (MDILLE). Positions 7 to 76 (LAGYTGIASG…RNLKAQAVIW (70 aa)) form a cross-link, cyclopeptide (Leu-Trp).

It belongs to the bacteriocin class V family.

The protein localises to the secreted. Cyclopeptide antibiotic with bacteriolytic activity against most streptococci (except S.rattus and S.mutans), Listeria spp., enterococci and staphylococci. In Streptococcus uberis, this protein is Bacteriocin uberolysin (ublA).